The chain runs to 122 residues: Large ribosomal subunit protein uL14 (122 aa).

Belongs to the universal ribosomal protein uL14 family. Part of the 50S ribosomal subunit. Forms a cluster with proteins L3 and L19. In the 70S ribosome, L14 and L19 interact and together make contacts with the 16S rRNA in bridges B5 and B8.

Binds to 23S rRNA. Forms part of two intersubunit bridges in the 70S ribosome. This is Large ribosomal subunit protein uL14 from Borrelia turicatae (strain 91E135).